The following is a 616-amino-acid chain: GPI mannosyltransferase 3 (616 aa).

At 1-16 (MAHEVHRIKPKLGRTQ) the chain is on the cytoplasmic side. The helical transmembrane segment at 17 to 37 (IFWVFLAFRVLNAVLTRTFFQ) threads the bilayer. Topologically, residues 38–86 (ADEFWQALEPAHWKAFKYGELTWEWKFGVRSYLFPMIFELTYRLVSLSS) are lumenal. A helical transmembrane segment spans residues 87-107 (ILLHYALLLLSTIGSDLLILL). Residues 108-136 (LPKYELSWQVAEDLKRLPFDVTRSFEYYG) are Cytoplasmic-facing. Residues 137–157 (VIYAPKIVMAVLASIGEYYIV) traverse the membrane as a helical segment. Residues 158-188 (RFVQKLYLLTLDKRNEKEEEERRSGLSEITK) lie on the Lumenal side of the membrane. A helical transmembrane segment spans residues 189-209 (FALLLSLTNFFNCFFITRTFI). The Cytoplasmic portion of the chain corresponds to 210-240 (NSFEMILTSIALYYWDWTGGQMIKESSFTKS). The helical transmembrane segment at 241-261 (LIFAFLACLQRPSSGLIWVIP) threads the bilayer. Residues 262 to 278 (SISLILNLVGKKQYHLL) lie on the Lumenal side of the membrane. A helical membrane pass occupies residues 279–299 (FITFSKVLRSFFLVFTANAII). Residues 300–338 (DMYFYEKVTFPFFRFLKFNFTTPLSKFYGVAPWHFHFFQ) are Cytoplasmic-facing. Residues 339-359 (SLPIVLGASIPAFAFGLFFPL) form a helical membrane-spanning segment. Residues 360–392 (SKRSFPKKYLNPFFQVKLTILLNLLVYSTLPHK) are Lumenal-facing. A helical membrane pass occupies residues 393-413 (EFRFIFPLQPLFILISSFGLL). Over 414–423 (RLDRDYWKRL) the chain is Cytoplasmic. The helical transmembrane segment at 424–444 (SGLKSLLWLVPFVSVFIALLL) threads the bilayer. The Lumenal portion of the chain corresponds to 445 to 616 (DTFHESGSIE…DYSDIPAADI (172 aa)).

The protein belongs to the glycosyltransferase 22 family. PIGB subfamily.

The protein localises to the endoplasmic reticulum membrane. It participates in glycolipid biosynthesis; glycosylphosphatidylinositol-anchor biosynthesis. Mannosyltransferase involved in glycosylphosphatidylinositol-anchor biosynthesis. Transfers the third mannose to Man2-GlcN-acyl-PI during GPI precursor assembly. In Saccharomyces cerevisiae (strain ATCC 204508 / S288c) (Baker's yeast), this protein is GPI mannosyltransferase 3 (GPI10).